Reading from the N-terminus, the 224-residue chain is Probable 2-phosphosulfolactate phosphatase (224 aa).

This sequence belongs to the ComB family. Mg(2+) serves as cofactor.

The catalysed reaction is (2R)-O-phospho-3-sulfolactate + H2O = (2R)-3-sulfolactate + phosphate. This is Probable 2-phosphosulfolactate phosphatase from Pseudothermotoga lettingae (strain ATCC BAA-301 / DSM 14385 / NBRC 107922 / TMO) (Thermotoga lettingae).